The sequence spans 120 residues: C-C motif chemokine 16 (120 aa).

The signal sequence occupies residues 1 to 23 (MKVSEAALSLLVLILIITSASRS). 2 disulfide bridges follow: C37-C60 and C38-C76.

The protein belongs to the intercrine beta (chemokine CC) family. In terms of tissue distribution, mainly expressed in liver, also found in spleen and thymus. Highly expressed in LPS- and IFN-gamma-activated monocytes, weakly in some lymphocytes, including natural killer cells, gamma-delta T-cells, and some T-cell clones.

It is found in the secreted. Functionally, shows chemotactic activity for lymphocytes and monocytes but not neutrophils. Also shows potent myelosuppressive activity, suppresses proliferation of myeloid progenitor cells. Recombinant SCYA16 shows chemotactic activity for monocytes and THP-1 monocytes, but not for resting lymphocytes and neutrophils. Induces a calcium flux in THP-1 cells that were desensitized by prior expression to RANTES. In Homo sapiens (Human), this protein is C-C motif chemokine 16 (CCL16).